An 837-amino-acid chain; its full sequence is Translation initiation factor IF-2 (837 aa).

Basic and acidic residues predominate over residues 97–139 (AEEIEAEQRRELEEQRAAEEAARLKAEQEARERAEEEARRQAE). The interval 97 to 253 (AEEIEAEQRR…QHGFQSPTGP (157 aa)) is disordered. The segment covering 140 to 175 (AAKAQTAETAAPAAAESASSAEPAQVVAAVEAAAPA) has biased composition (low complexity). Positions 176 to 197 (PERKKEEPRRVEKPRSDDDERR) are enriched in basic and acidic residues. Residues 198-208 (DRKHAQHRPSL) are compositionally biased toward basic residues. Over residues 219–229 (RSGEDEADGFR) the composition is skewed to basic and acidic residues. Over residues 230–244 (RGGRGGKSKLKKRNQ) the composition is skewed to basic residues. The tr-type G domain occupies 337 to 504 (ARAPVVTVMG…AVLLQAEILE (168 aa)). Residues 346–353 (GHVDHGKT) are G1. 346–353 (GHVDHGKT) contacts GTP. Positions 371–375 (GITQH) are G2. The segment at 392–395 (DTPG) is G3. GTP is bound by residues 392–396 (DTPGH) and 446–449 (NKID). Residues 446-449 (NKID) are G4. The G5 stretch occupies residues 482–484 (SAK).

Belongs to the TRAFAC class translation factor GTPase superfamily. Classic translation factor GTPase family. IF-2 subfamily.

It localises to the cytoplasm. Its function is as follows. One of the essential components for the initiation of protein synthesis. Protects formylmethionyl-tRNA from spontaneous hydrolysis and promotes its binding to the 30S ribosomal subunits. Also involved in the hydrolysis of GTP during the formation of the 70S ribosomal complex. The sequence is that of Translation initiation factor IF-2 from Stutzerimonas stutzeri (strain A1501) (Pseudomonas stutzeri).